Reading from the N-terminus, the 492-residue chain is Trypanothione reductase (492 aa).

35-52 (DVQTHHGPPHYAALGGTC) contributes to the FAD binding site. Cys52 and Cys57 are oxidised to a cystine. The active-site Proton acceptor is His461.

Belongs to the class-I pyridine nucleotide-disulfide oxidoreductase family. In terms of assembly, homodimer. The cofactor is FAD.

It localises to the cytoplasm. The catalysed reaction is trypanothione + NADP(+) = trypanothione disulfide + NADPH + H(+). Functionally, trypanothione is the parasite analog of glutathione; this enzyme is the equivalent of glutathione reductase. This Trypanosoma brucei brucei protein is Trypanothione reductase (TPR).